Consider the following 67-residue polypeptide: Large ribosomal subunit protein bL32 (67 aa).

The span at 1–19 (MAVPKRKMSRANTRMRRSQ) shows a compositional bias: basic residues. A disordered region spans residues 1-22 (MAVPKRKMSRANTRMRRSQWKA).

It belongs to the bacterial ribosomal protein bL32 family.

This Kocuria rhizophila (strain ATCC 9341 / DSM 348 / NBRC 103217 / DC2201) protein is Large ribosomal subunit protein bL32.